A 134-amino-acid chain; its full sequence is Holo-[acyl-carrier-protein] synthase (134 aa).

Mg(2+) is bound by residues aspartate 8 and glutamate 57.

The protein belongs to the P-Pant transferase superfamily. AcpS family. Requires Mg(2+) as cofactor.

The protein resides in the cytoplasm. The catalysed reaction is apo-[ACP] + CoA = holo-[ACP] + adenosine 3',5'-bisphosphate + H(+). In terms of biological role, transfers the 4'-phosphopantetheine moiety from coenzyme A to a Ser of acyl-carrier-protein. The protein is Holo-[acyl-carrier-protein] synthase of Roseobacter denitrificans (strain ATCC 33942 / OCh 114) (Erythrobacter sp. (strain OCh 114)).